The chain runs to 272 residues: Proteasome subunit beta type-5 (272 aa).

The propeptide at 1-55 (MKLDTSGLESTAPIFRRSDFVFDGLQMTPSFDLPNPTDFDGFQKEAVQMVKPAKG) is removed in mature form. The active-site Nucleophile is the threonine 56.

The protein belongs to the peptidase T1B family. The 26S proteasome consists of a 20S proteasome core and two 19S regulatory subunits. The 20S proteasome core is composed of 28 subunits that are arranged in four stacked rings, resulting in a barrel-shaped structure. The two end rings are each formed by seven alpha subunits, and the two central rings are each formed by seven beta subunits. The catalytic chamber with the active sites is on the inside of the barrel.

It is found in the cytoplasm. The protein localises to the nucleus. It carries out the reaction Cleavage of peptide bonds with very broad specificity.. Functionally, the proteasome is a multicatalytic proteinase complex which is characterized by its ability to cleave peptides with Arg, Phe, Tyr, Leu, and Glu adjacent to the leaving group at neutral or slightly basic pH. The proteasome has an ATP-dependent proteolytic activity. The protein is Proteasome subunit beta type-5 of Spinacia oleracea (Spinach).